The following is a 290-amino-acid chain: Protease HtpX (290 aa).

The next 2 membrane-spanning stretches (helical) occupy residues 12–32 (IAVM…GLLA) and 42–62 (ALLV…LLIS). Histidine 147 is a binding site for Zn(2+). Residue glutamate 148 is part of the active site. Histidine 151 serves as a coordination point for Zn(2+). 2 consecutive transmembrane segments (helical) span residues 162-182 (LIQG…GHVV) and 197-217 (FWIV…MIVM). Glutamate 224 lines the Zn(2+) pocket.

It belongs to the peptidase M48B family. The cofactor is Zn(2+).

It is found in the cell inner membrane. This chain is Protease HtpX, found in Pseudoalteromonas atlantica (strain T6c / ATCC BAA-1087).